Reading from the N-terminus, the 224-residue chain is Probable GTP-binding protein EngB (224 aa).

Residues 27–201 (SGIEVAFAGR…DAIICQWLEQ (175 aa)) enclose the EngB-type G domain. GTP-binding positions include 35 to 42 (GRSNAGKS), 62 to 66 (GRTQL), 80 to 83 (DLPG), 147 to 150 (TKCD), and 180 to 182 (FSS). The Mg(2+) site is built by S42 and T64. A disordered region spans residues 205-224 (EYELPEEDDFDDSDEFTEEE).

This sequence belongs to the TRAFAC class TrmE-Era-EngA-EngB-Septin-like GTPase superfamily. EngB GTPase family. Mg(2+) is required as a cofactor.

In terms of biological role, necessary for normal cell division and for the maintenance of normal septation. This Colwellia psychrerythraea (strain 34H / ATCC BAA-681) (Vibrio psychroerythus) protein is Probable GTP-binding protein EngB.